The sequence spans 558 residues: N-acetylglucosamine-6-O-sulfatase (558 aa).

Residue serine 101 is modified to 3-oxoalanine (Ser).

Belongs to the sulfatase family. In terms of processing, the conversion to 3-oxoalanine (also known as C-formylglycine, FGly), of a serine or cysteine residue in prokaryotes and of a cysteine residue in eukaryotes, is critical for catalytic activity.

Exosulfatase involved in the degradation of the glycosaminoglycan (GAG) heparan sulfate (HS). Catalyzes the hydrolysis of the 6-sulfate groups of the N-acetyl-D-glucosamine 6-sulfate units. GAG-specific sulfatases play a key role in the persistence of the major human gut symbiont B.thetaiotaomicron in the host gastrointestinal tract. The protein is N-acetylglucosamine-6-O-sulfatase of Bacteroides thetaiotaomicron (strain ATCC 29148 / DSM 2079 / JCM 5827 / CCUG 10774 / NCTC 10582 / VPI-5482 / E50).